Here is an 86-residue protein sequence, read N- to C-terminus: Large ribosomal subunit protein uL23 (86 aa).

This sequence belongs to the universal ribosomal protein uL23 family. As to quaternary structure, part of the 50S ribosomal subunit. Contacts protein L29.

Its function is as follows. Binds to 23S rRNA. One of the proteins that surrounds the polypeptide exit tunnel on the outside of the ribosome. The sequence is that of Large ribosomal subunit protein uL23 from Thermococcus sibiricus (strain DSM 12597 / MM 739).